A 187-amino-acid polypeptide reads, in one-letter code: Peptide deformylase (187 aa).

Positions 94 and 136 each coordinate Fe cation. E137 is an active-site residue. H140 contributes to the Fe cation binding site.

The protein belongs to the polypeptide deformylase family. Requires Fe(2+) as cofactor.

It carries out the reaction N-terminal N-formyl-L-methionyl-[peptide] + H2O = N-terminal L-methionyl-[peptide] + formate. In terms of biological role, removes the formyl group from the N-terminal Met of newly synthesized proteins. Requires at least a dipeptide for an efficient rate of reaction. N-terminal L-methionine is a prerequisite for activity but the enzyme has broad specificity at other positions. The polypeptide is Peptide deformylase (Chlorobaculum parvum (strain DSM 263 / NCIMB 8327) (Chlorobium vibrioforme subsp. thiosulfatophilum)).